A 513-amino-acid polypeptide reads, in one-letter code: Laccase (513 aa).

Plastocyanin-like domains lie at 45 to 81, 101 to 178, 240 to 318, and 378 to 509; these read PTRLWGYNGLFPGPTIEVKRNENVYVKWMNNLPSTHF, KTVV…HDPK, WPYL…ILAN, and QDEY…MDIT. Histidine 105, histidine 107, histidine 153, and histidine 155 together coordinate Cu cation. Histidine 419, histidine 422, histidine 424, histidine 491, cysteine 492, histidine 493, histidine 497, and methionine 502 together coordinate Cu cation.

The protein belongs to the multicopper oxidase family. Monomer. Cu(2+) serves as cofactor.

It localises to the spore coat. It catalyses the reaction 4 hydroquinone + O2 = 4 benzosemiquinone + 2 H2O. The enzyme catalyses 2 (4Z,15Z)-bilirubin IXalpha + O2 = 2 biliverdin IXalpha + 2 H2O. Inhibited by azide. Multicopper oxidase that catalyzes the oxidation of a variety of substrates, including phenolic and non-phenolic compounds. Substrates include syringaldazine (SGZ), 2,6-dimethoxyphenol (2,6-DMP) and the non-phenolic compound 2,2'-azino-bis(3-ethylbenzothiazoline-6-sulfonic acid) (ABTS). Has no tyrosinase activity. Is implicated in the biosynthesis of a brownish pigment that characterizes sporulating colonies of B.subtilis, and which appears to be a melanin-like product and to confer protection against UV light. In terms of biological role, in vitro, also shows strong bilirubin oxidase (BOD) activity, and can catalyze the oxidation of free bilirubin (UB), direct bilirubin (conjugated with glucuronic acid, DB) and ditaurobilirubin. This Bacillus subtilis (strain 168) protein is Laccase.